Consider the following 289-residue polypeptide: Bifunctional protein FolD (289 aa).

Residues 166 to 168 (GRS), S191, and I232 contribute to the NADP(+) site.

Belongs to the tetrahydrofolate dehydrogenase/cyclohydrolase family. Homodimer.

The enzyme catalyses (6R)-5,10-methylene-5,6,7,8-tetrahydrofolate + NADP(+) = (6R)-5,10-methenyltetrahydrofolate + NADPH. It catalyses the reaction (6R)-5,10-methenyltetrahydrofolate + H2O = (6R)-10-formyltetrahydrofolate + H(+). It functions in the pathway one-carbon metabolism; tetrahydrofolate interconversion. Catalyzes the oxidation of 5,10-methylenetetrahydrofolate to 5,10-methenyltetrahydrofolate and then the hydrolysis of 5,10-methenyltetrahydrofolate to 10-formyltetrahydrofolate. The chain is Bifunctional protein FolD from Synechococcus elongatus (strain ATCC 33912 / PCC 7942 / FACHB-805) (Anacystis nidulans R2).